A 59-amino-acid polypeptide reads, in one-letter code: Conorfamide-Ep1 (59 aa).

The signal sequence occupies residues 1–19 (MSGCGFLLLALLLLVTVEA). A propeptide spanning residues 20–25 (TKMEKK) is cleaved from the precursor. Ile-43 is subject to Isoleucine amide. Residues 45 to 59 (RRDMQSPLLSERLRF) constitute a propeptide that is removed on maturation.

The protein belongs to the FARP (FMRFamide related peptide) family. As to expression, expressed by the venom duct.

Its subcellular location is the secreted. Its function is as follows. Neurotoxin that is active on vertebrates. When tested at high doses (10 uM), the toxin affects all zebrafish and mouse DRG neurons in culture, which could be an indication of an effect on a widely expressed receptor or ion channel found in both species. At low doses (1 uM), the effects of the toxin are confined to a specific subpopulation of zebrafish and mouse DRG neurons. In vivo, it induces long-lasting dramatic alterations in the locomotor behavior of zebrafish larvae. It rapidly induces hypoactivity and death of larvae at high doses and it causes hyperactivity at lower doses. In zebrafish adults, intramuscular injection causes the decrease of the movements and visited spaces. In mice, intracranial injection causes lethargy and prolonges sleeping phases and reduced movement. This is Conorfamide-Ep1 from Conus episcopatus (Bishop's cone).